The chain runs to 364 residues: ATP synthase gamma chain, chloroplastic (364 aa).

The transit peptide at 1–41 directs the protein to the chloroplast; the sequence is MACSLSFSSSVSTFHLPTTTQSTQAPPNNATTLPTTNPIQC. The disordered stretch occupies residues 17 to 36; the sequence is PTTTQSTQAPPNNATTLPTT. Residues 25 to 36 are compositionally biased toward low complexity; that stretch reads APPNNATTLPTT. Residue Cys-130 is part of the active site. The cysteines at positions 240 and 246 are disulfide-linked.

This sequence belongs to the ATPase gamma chain family. In terms of assembly, F-type ATPases have 2 components, CF(1) - the catalytic core - and CF(0) - the membrane proton channel. CF(1) has five subunits: alpha(3), beta(3), gamma(1), delta(1), epsilon(1). CF(0) has four main subunits: a, b, b' and c. Disulfide bond; Cys-240 and Cys-246 are known to form a disulfide bridge in the dark which gives rise to an inactive enzyme. Activation can be brought about by a ferredoxin-dependent reduction of the disulfide bond in the light.

It localises to the plastid. It is found in the chloroplast thylakoid membrane. In terms of biological role, produces ATP from ADP in the presence of a proton gradient across the membrane. The gamma chain is believed to be important in regulating ATPase activity and the flow of protons through the CF(0) complex. In Spinacia oleracea (Spinach), this protein is ATP synthase gamma chain, chloroplastic (ATPC).